A 226-amino-acid polypeptide reads, in one-letter code: Leucyl/phenylalanyl-tRNA--protein transferase (226 aa).

Belongs to the L/F-transferase family.

It localises to the cytoplasm. The enzyme catalyses N-terminal L-lysyl-[protein] + L-leucyl-tRNA(Leu) = N-terminal L-leucyl-L-lysyl-[protein] + tRNA(Leu) + H(+). It catalyses the reaction N-terminal L-arginyl-[protein] + L-leucyl-tRNA(Leu) = N-terminal L-leucyl-L-arginyl-[protein] + tRNA(Leu) + H(+). The catalysed reaction is L-phenylalanyl-tRNA(Phe) + an N-terminal L-alpha-aminoacyl-[protein] = an N-terminal L-phenylalanyl-L-alpha-aminoacyl-[protein] + tRNA(Phe). In terms of biological role, functions in the N-end rule pathway of protein degradation where it conjugates Leu, Phe and, less efficiently, Met from aminoacyl-tRNAs to the N-termini of proteins containing an N-terminal arginine or lysine. The polypeptide is Leucyl/phenylalanyl-tRNA--protein transferase (Bradyrhizobium sp. (strain ORS 278)).